Reading from the N-terminus, the 102-residue chain is NADH-quinone oxidoreductase subunit K (102 aa).

A run of 3 helical transmembrane segments spans residues 6-26 (MEHG…GLLI), 30-50 (LLFI…AFVV), and 65-85 (ILVI…LLLL).

It belongs to the complex I subunit 4L family. NDH-1 is composed of 14 different subunits. Subunits NuoA, H, J, K, L, M, N constitute the membrane sector of the complex.

The protein resides in the cell inner membrane. It catalyses the reaction a quinone + NADH + 5 H(+)(in) = a quinol + NAD(+) + 4 H(+)(out). Functionally, NDH-1 shuttles electrons from NADH, via FMN and iron-sulfur (Fe-S) centers, to quinones in the respiratory chain. The immediate electron acceptor for the enzyme in this species is believed to be ubiquinone. Couples the redox reaction to proton translocation (for every two electrons transferred, four hydrogen ions are translocated across the cytoplasmic membrane), and thus conserves the redox energy in a proton gradient. The protein is NADH-quinone oxidoreductase subunit K of Aeromonas hydrophila subsp. hydrophila (strain ATCC 7966 / DSM 30187 / BCRC 13018 / CCUG 14551 / JCM 1027 / KCTC 2358 / NCIMB 9240 / NCTC 8049).